The primary structure comprises 338 residues: Phenylalanine--tRNA ligase alpha subunit (338 aa).

Residue E252 coordinates Mg(2+).

This sequence belongs to the class-II aminoacyl-tRNA synthetase family. Phe-tRNA synthetase alpha subunit type 1 subfamily. In terms of assembly, tetramer of two alpha and two beta subunits. Requires Mg(2+) as cofactor.

It localises to the cytoplasm. The enzyme catalyses tRNA(Phe) + L-phenylalanine + ATP = L-phenylalanyl-tRNA(Phe) + AMP + diphosphate + H(+). The chain is Phenylalanine--tRNA ligase alpha subunit from Ectopseudomonas mendocina (strain ymp) (Pseudomonas mendocina).